Consider the following 239-residue polypeptide: tRNA (guanine-N(1)-)-methyltransferase (239 aa).

S-adenosyl-L-methionine-binding positions include Gly110 and 130-135 (VGDYVL).

Belongs to the RNA methyltransferase TrmD family. As to quaternary structure, homodimer.

The protein resides in the cytoplasm. It catalyses the reaction guanosine(37) in tRNA + S-adenosyl-L-methionine = N(1)-methylguanosine(37) in tRNA + S-adenosyl-L-homocysteine + H(+). Functionally, specifically methylates guanosine-37 in various tRNAs. This is tRNA (guanine-N(1)-)-methyltransferase from Borrelia turicatae (strain 91E135).